The chain runs to 1078 residues: MIKASKCNKPRALFLVRVSIPRTFIRNATSAVPTTIKLNDLASLPPITKSLPTNLPFLMPDTLQSLLRFDSEKEKQPSTDKSNDKDKPSRKEKGKDKEKENEEKKDINMDEKYEINEETDTKPTIDPNNPVSSKSNISSSSGGDNNNNNNNNNNNNDSDGKNDDGSPKDKEFLSPSDSGLHPPFLAIAMKDRPFLPGATRHLHVSDPEVIKCVNHMINSNIKSPYFVLFHVRDTNSEDAALDVIKDRDFVHEVGTLCQIIKTTGSEILVYPHYRVKLVDISTPNSRSESIEKEQDNSQTSYLKKFEVSYAVTQQLKDEPYDEQSITINAWTRRIKELYEKLAPKYDQPENKEEIMSNPSMLADFIASKVHAKPEQIQEILESSNVETKLELSLQLLQVEADADEMRQTALKNIRERTEKAYAQSLIKEYTKELLKAAGIGENSKVHKFDERIKHLKMPEEAMKAYKTEKERLGTQSDMEQNVVERYLDWLTQIPFGVYTKDSFNVKKAREILDRDHYGLKDVKDRILEFISVGKISGNVDGKILCLAGPPGTGKTSIAKSIAEALNRKYTRIAVGGVQDVHDVKGHRRTYVASIPGRIVTALTQAKTSNPLMLIDEIDKLDTTSHGGAARAFLEILDPEQNNSFVDNFIEVKVDLSKVLFVCTANYLGSIPGPLRDRMEIIEVNGYTKNDKIEITKRHLIPAAAKKVGLDEGRVVIPDETISRLIDKYCRESGLRHIKSLINRIFSKASRKIVEELEETDVDSHNKDTVEGTLVAKESEKVISDKAKIDTENSPIEYIQSNTEVKAETTTESQQEQEKEKEKDEEIKKLDLPADLKIEVKPETLKDFVGPEIYIKDRLYETLNPGVATGLAYNTSGDGDALYIESILTDSISSDLGNAGLHVTGSLKDVMKESASIAYSFAKQFMVRQFPDNRFFEAAHIHVHCPGGAIPKDGPSAGIAFTSSLVSLALNKSLPNDTAMTGEITLTGKVLAIGGLREKSLGAKRAGYTKIIFPKDCEYQLDEIPDEVKEGLTYIPVEWYSEVFEHLFQGISKEEGNSVWKEEFAKLEDKKKSKKTNTK.

The N-terminal 27 residues, Met-1–Asn-27, are a transit peptide targeting the mitochondrion. The span at Ser-71–Pro-123 shows a compositional bias: basic and acidic residues. Residues Ser-71–Gly-179 are disordered. Over residues Pro-127–Asp-157 the composition is skewed to low complexity. Residues Ser-158–Phe-172 are compositionally biased toward basic and acidic residues. One can recognise a Lon N-terminal domain in the interval Pro-182 to Ala-400. An ATP-binding site is contributed by Gly-548–Thr-555. The tract at residues Asn-792 to Glu-825 is disordered. Residues Glu-815–Glu-825 are compositionally biased toward basic and acidic residues. Residues Thr-861–Gly-1049 enclose the Lon proteolytic domain. Residues Ser-955 and Lys-998 contribute to the active site.

It belongs to the peptidase S16 family. Homohexamer or homoheptamer. Organized in a ring with a central cavity.

Its subcellular location is the mitochondrion matrix. The enzyme catalyses Hydrolysis of proteins in presence of ATP.. Its function is as follows. ATP-dependent serine protease that mediates the selective degradation of misfolded, unassembled or oxidatively damaged polypeptides as well as certain short-lived regulatory proteins in the mitochondrial matrix. May also have a chaperone function in the assembly of inner membrane protein complexes. Participates in the regulation of mitochondrial gene expression and in the maintenance of the integrity of the mitochondrial genome. Binds to mitochondrial DNA in a site-specific manner. The polypeptide is Lon protease homolog, mitochondrial (Candida albicans (strain SC5314 / ATCC MYA-2876) (Yeast)).